Reading from the N-terminus, the 90-residue chain is U7-theraphotoxin-Hhn1a 8 (90 aa).

Residues 1 to 19 (MKTAIFTVVLALAVFAVLS) form the signal peptide. Residues 20-50 (FGWEANEKALSEEFTELIHEKGAASETEARE) constitute a propeptide that is removed on maturation. Disulfide bonds link Cys-51–Cys-65, Cys-58–Cys-70, and Cys-64–Cys-81.

This sequence belongs to the neurotoxin 10 (Hwtx-1) family. 13 (Hntx-13) subfamily. As to expression, expressed by the venom gland.

It localises to the secreted. In terms of biological role, ion channel inhibitor. This is U7-theraphotoxin-Hhn1a 8 from Cyriopagopus hainanus (Chinese bird spider).